The sequence spans 329 residues: Malate dehydrogenase (329 aa).

Residue 12-18 (GAAGQIG) participates in NAD(+) binding. Substrate contacts are provided by Arg93 and Arg99. NAD(+) contacts are provided by residues Asn106, Gln113, and 130–132 (VGN). The substrate site is built by Asn132 and Arg163. His188 functions as the Proton acceptor in the catalytic mechanism.

It belongs to the LDH/MDH superfamily. MDH type 2 family.

It carries out the reaction (S)-malate + NAD(+) = oxaloacetate + NADH + H(+). Catalyzes the reversible oxidation of malate to oxaloacetate. This chain is Malate dehydrogenase, found in Frankia casuarinae (strain DSM 45818 / CECT 9043 / HFP020203 / CcI3).